The primary structure comprises 102 residues: Vacuolar ATPase assembly integral membrane protein VMA21 (102 aa).

Topologically, residues 1–30 (MERYDKATLNAAFAPEFRQNEGSLTSTLRT) are cytoplasmic. Residues 31-51 (LLFFTALMITLPVGLYFSSKA) form a helical membrane-spanning segment. The Lumenal portion of the chain corresponds to 52–66 (YIFEGTLGMSNRDSY). Residues 67 to 87 (FYAAIVAVVTVHVVLAMFVYV) traverse the membrane as a helical segment. Over 88 to 102 (AWSEGTRQWREGKQD) the chain is Cytoplasmic.

This sequence belongs to the VMA21 family. In terms of assembly, associates with the V0 complex of the vacuolar ATPase (V-ATPase). Interacts with ATP6AP2.

It is found in the endoplasmic reticulum membrane. The protein resides in the endoplasmic reticulum-Golgi intermediate compartment membrane. Its subcellular location is the cytoplasmic vesicle. It localises to the COPII-coated vesicle membrane. Its function is as follows. Required for the assembly of the V0 complex of the vacuolar ATPase (V-ATPase) in the endoplasmic reticulum. This is Vacuolar ATPase assembly integral membrane protein VMA21 from Gallus gallus (Chicken).